The sequence spans 145 residues: Peptide methionine sulfoxide reductase MsrB (145 aa).

The MsrB domain occupies 6–129 (EEELKQTLTD…NAAALRFVPV (124 aa)). Residue Cys-118 is the Nucleophile of the active site.

Belongs to the MsrB Met sulfoxide reductase family.

It catalyses the reaction L-methionyl-[protein] + [thioredoxin]-disulfide + H2O = L-methionyl-(R)-S-oxide-[protein] + [thioredoxin]-dithiol. The protein is Peptide methionine sulfoxide reductase MsrB of Enterococcus faecalis (strain ATCC 700802 / V583).